The sequence spans 676 residues: Kojibiose hydrolase (676 aa).

The signal sequence occupies residues 1 to 20 (MNKGIIQLLALSLFCISVKA). Glu469 (proton donor) is an active-site residue. Glu613 (proton acceptor) is an active-site residue.

It belongs to the glycosyl hydrolase 65 family.

It carries out the reaction kojibiose + H2O = beta-D-glucose + D-glucose. Its function is as follows. Glycosidase that specifically hydrolyzes kojibiose to beta-glucose and glucose. Besides its activity on kojibiose, is also able to act on alpha-1,2-oligoglucans with a higher degree of polymerization. Shows weak activity on nigerose, but is not capable of breaking down trehalose, maltose, isomaltose, sucrose, isomaltulose, turanose or melezitose. This is Kojibiose hydrolase from Mucilaginibacter mallensis.